The chain runs to 425 residues: Glutamyl-tRNA reductase (425 aa).

Residues 49 to 52 (TCNR), serine 109, 114 to 116 (EGQ), and glutamine 120 each bind substrate. Cysteine 50 functions as the Nucleophile in the catalytic mechanism. Residue 189–194 (GAGETG) coordinates NADP(+).

Belongs to the glutamyl-tRNA reductase family. As to quaternary structure, homodimer.

The enzyme catalyses (S)-4-amino-5-oxopentanoate + tRNA(Glu) + NADP(+) = L-glutamyl-tRNA(Glu) + NADPH + H(+). It participates in porphyrin-containing compound metabolism; protoporphyrin-IX biosynthesis; 5-aminolevulinate from L-glutamyl-tRNA(Glu): step 1/2. It functions in the pathway porphyrin-containing compound metabolism; chlorophyll biosynthesis. Catalyzes the NADPH-dependent reduction of glutamyl-tRNA(Glu) to glutamate 1-semialdehyde (GSA). This Chlorobium phaeobacteroides (strain DSM 266 / SMG 266 / 2430) protein is Glutamyl-tRNA reductase.